A 96-amino-acid chain; its full sequence is Co-chaperonin GroES (96 aa).

It belongs to the GroES chaperonin family. Heptamer of 7 subunits arranged in a ring. Interacts with the chaperonin GroEL.

It localises to the cytoplasm. In terms of biological role, together with the chaperonin GroEL, plays an essential role in assisting protein folding. The GroEL-GroES system forms a nano-cage that allows encapsulation of the non-native substrate proteins and provides a physical environment optimized to promote and accelerate protein folding. GroES binds to the apical surface of the GroEL ring, thereby capping the opening of the GroEL channel. The polypeptide is Co-chaperonin GroES (Legionella jeonii).